We begin with the raw amino-acid sequence, 344 residues long: tRNA N6-adenosine threonylcarbamoyltransferase (344 aa).

Residues histidine 111 and histidine 115 each coordinate Fe cation. Residues 134–138 (LVSGG), aspartate 167, glycine 180, aspartate 184, and asparagine 277 contribute to the substrate site. Fe cation is bound at residue aspartate 305.

The protein belongs to the KAE1 / TsaD family. It depends on Fe(2+) as a cofactor.

It localises to the cytoplasm. It carries out the reaction L-threonylcarbamoyladenylate + adenosine(37) in tRNA = N(6)-L-threonylcarbamoyladenosine(37) in tRNA + AMP + H(+). Required for the formation of a threonylcarbamoyl group on adenosine at position 37 (t(6)A37) in tRNAs that read codons beginning with adenine. Is involved in the transfer of the threonylcarbamoyl moiety of threonylcarbamoyl-AMP (TC-AMP) to the N6 group of A37, together with TsaE and TsaB. TsaD likely plays a direct catalytic role in this reaction. The protein is tRNA N6-adenosine threonylcarbamoyltransferase of Microcystis aeruginosa (strain NIES-843 / IAM M-2473).